A 593-amino-acid polypeptide reads, in one-letter code: UvrABC system protein C (593 aa).

A GIY-YIG domain is found at 17 to 94 (MEPGCYLMKD…IKQYQPRYNI (78 aa)). In terms of domain architecture, UVR spans 199–234 (KTILKSLEERMLTASESLDFERAKEYRDLIQHIQNL).

Belongs to the UvrC family. Interacts with UvrB in an incision complex.

It is found in the cytoplasm. Functionally, the UvrABC repair system catalyzes the recognition and processing of DNA lesions. UvrC both incises the 5' and 3' sides of the lesion. The N-terminal half is responsible for the 3' incision and the C-terminal half is responsible for the 5' incision. This chain is UvrABC system protein C, found in Staphylococcus aureus (strain MSSA476).